The following is a 423-amino-acid chain: Histidine--tRNA ligase (423 aa).

Belongs to the class-II aminoacyl-tRNA synthetase family. Homodimer.

It localises to the cytoplasm. It carries out the reaction tRNA(His) + L-histidine + ATP = L-histidyl-tRNA(His) + AMP + diphosphate + H(+). This is Histidine--tRNA ligase from Shewanella loihica (strain ATCC BAA-1088 / PV-4).